The chain runs to 55 residues: MNNEDFNLDLIKISKENNSGASPRITSKSLCTPGCKTGILMTCPLKTATCGCHFG.

Residues 1–24 constitute a propeptide that is removed on maturation; that stretch reads MNNEDFNLDLIKISKENNSGASPR. 2,3-didehydrobutyrine is present on threonine 26. A cross-link (lanthionine (Ser-Cys)) is located at residues 27–31; the sequence is SKSLC. Serine 29 bears the 2,3-didehydroalanine (Ser) mark. 4 cross-links (beta-methyllanthionine (Thr-Cys)) span residues 32-35, 37-43, 47-50, and 49-52; these read TPGC, TGILMTC, TATC, and TCGC. Threonine 42 is subject to 2,3-didehydrobutyrine.

Post-translationally, maturation of lantibiotics involves the enzymatic conversion of Thr, and Ser into dehydrated AA and the formation of thioether bonds with cysteine. This is followed by membrane translocation and cleavage of the modified precursor.

Its subcellular location is the secreted. Functionally, lanthionine-containing peptide antibiotic (lantibiotic) active on Gram-positive bacteria. The bactericidal activity of lantibiotics is based on depolarization of energized bacterial cytoplasmic membranes, initiated by the formation of aqueous transmembrane pores. In Streptococcus uberis, this protein is Lantibiotic nisin-U (nsuA).